The primary structure comprises 266 residues: Glucosamine-6-phosphate deaminase (266 aa).

Asp-72 acts as the Proton acceptor; for enolization step in catalysis. Asp-141 acts as the For ring-opening step in catalysis. The Proton acceptor; for ring-opening step role is filled by His-143. The active-site For ring-opening step is the Glu-148.

Belongs to the glucosamine/galactosamine-6-phosphate isomerase family. NagB subfamily. Homohexamer.

The enzyme catalyses alpha-D-glucosamine 6-phosphate + H2O = beta-D-fructose 6-phosphate + NH4(+). It functions in the pathway amino-sugar metabolism; N-acetylneuraminate degradation; D-fructose 6-phosphate from N-acetylneuraminate: step 5/5. With respect to regulation, allosterically activated by N-acetylglucosamine 6-phosphate (GlcNAc6P). Catalyzes the reversible isomerization-deamination of glucosamine 6-phosphate (GlcN6P) to form fructose 6-phosphate (Fru6P) and ammonium ion. This Serratia proteamaculans (strain 568) protein is Glucosamine-6-phosphate deaminase.